Reading from the N-terminus, the 616-residue chain is Cytochrome c oxidase subunit 1 (616 aa).

A helical transmembrane segment spans residues 28–48; that stretch reads HLYLISGGFFFLLGGLEALFI. His72 provides a ligand contact to Fe(II)-heme a. 6 consecutive transmembrane segments (helical) span residues 75–95, 102–122, 158–178, 198–218, 243–263, and 275–295; these read TMIF…VVPL, VAFP…GLFL, GLQI…VTII, FVTS…LIFM, LFWV…FGIF, and LFGY…GFMV. Cu cation is bound by residues His249 and Tyr253. The 1'-histidyl-3'-tyrosine (His-Tyr) cross-link spans 249 to 253; the sequence is HPEVY. Residues His298 and His299 each contribute to the Cu cation site. The next 7 membrane-spanning stretches (helical) occupy residues 303 to 323, 349 to 369, 380 to 400, 420 to 440, 463 to 483, 553 to 573, and 577 to 597; these read VGMG…IAVP, AVAF…LASA, FVVA…LLAG, ITFW…HFLG, ISTI…INIV, SSFL…GFTY, and AGWG…SMFL. His384 contacts Fe(II)-heme o. His384 is a binding site for heme a3. His386 provides a ligand contact to Fe(II)-heme a.

The protein belongs to the heme-copper respiratory oxidase family. Cu(2+) serves as cofactor. It depends on heme as a cofactor.

Its subcellular location is the cell membrane. It carries out the reaction 4 Fe(II)-[cytochrome c] + O2 + 8 H(+)(in) = 4 Fe(III)-[cytochrome c] + 2 H2O + 4 H(+)(out). It functions in the pathway energy metabolism; oxidative phosphorylation. In terms of biological role, cytochrome c oxidase is the component of the respiratory chain that catalyzes the reduction of oxygen to water. Subunits 1-3 form the functional core of the enzyme complex. Co I is the catalytic subunit of the enzyme. Electrons originating in cytochrome c are transferred via the copper A center of subunit 2 and heme a of subunit 1 to the bimetallic center formed by heme a3 and copper B. This cytochrome c oxidase shows proton pump activity across the membrane in addition to the electron transfer. In Bacillus sp. (strain PS3), this protein is Cytochrome c oxidase subunit 1 (ctaD).